An 83-amino-acid polypeptide reads, in one-letter code: Small ribosomal subunit protein eS21 (83 aa).

Belongs to the eukaryotic ribosomal protein eS21 family. Component of the 40S small ribosomal subunit. Interacts with sta.

Its subcellular location is the cytoplasm. The protein localises to the cytosol. The protein resides in the rough endoplasmic reticulum. Its function is as follows. May be an associated component of the ribosome rather than a core structural subunit. May act as a translation initiation factor. Has a role in regulation of cell proliferation in the hematopoietic organs and the imaginal disks of larva. The chain is Small ribosomal subunit protein eS21 (RpS21) from Drosophila simulans (Fruit fly).